Here is a 260-residue protein sequence, read N- to C-terminus: Thiazole synthase (260 aa).

Lys96 functions as the Schiff-base intermediate with DXP in the catalytic mechanism. 1-deoxy-D-xylulose 5-phosphate-binding positions include Gly157, 184–185 (AG), and 206–207 (NT).

Belongs to the ThiG family. In terms of assembly, homotetramer. Forms heterodimers with either ThiH or ThiS.

Its subcellular location is the cytoplasm. It carries out the reaction [ThiS sulfur-carrier protein]-C-terminal-Gly-aminoethanethioate + 2-iminoacetate + 1-deoxy-D-xylulose 5-phosphate = [ThiS sulfur-carrier protein]-C-terminal Gly-Gly + 2-[(2R,5Z)-2-carboxy-4-methylthiazol-5(2H)-ylidene]ethyl phosphate + 2 H2O + H(+). The protein operates within cofactor biosynthesis; thiamine diphosphate biosynthesis. Functionally, catalyzes the rearrangement of 1-deoxy-D-xylulose 5-phosphate (DXP) to produce the thiazole phosphate moiety of thiamine. Sulfur is provided by the thiocarboxylate moiety of the carrier protein ThiS. In vitro, sulfur can be provided by H(2)S. The chain is Thiazole synthase from Bradyrhizobium sp. (strain ORS 278).